A 172-amino-acid chain; its full sequence is MERAEKREFVTELNEVFKASGSVVVAHYAGATVAQMNDFRSKMRAAGGTVKVAKNRLAKIALQGTEAEGMSNLFKGQTLIAYSTDPITAPKVVMDFAKTNDKIIVLGGAMGTTTLNADAVKSLATLPSLDELRAKLLGMIQTPATRIAGVVAAPASQLARVFAAYAKKDEAA.

The protein belongs to the universal ribosomal protein uL10 family. Part of the ribosomal stalk of the 50S ribosomal subunit. The N-terminus interacts with L11 and the large rRNA to form the base of the stalk. The C-terminus forms an elongated spine to which L12 dimers bind in a sequential fashion forming a multimeric L10(L12)X complex.

Forms part of the ribosomal stalk, playing a central role in the interaction of the ribosome with GTP-bound translation factors. The sequence is that of Large ribosomal subunit protein uL10 from Rhizobium johnstonii (strain DSM 114642 / LMG 32736 / 3841) (Rhizobium leguminosarum bv. viciae).